Consider the following 128-residue polypeptide: Keratin-associated protein 2-1 (128 aa).

Positions 5 to 112 are 10 X 5 AA repeats of C-C-[CDPQRWG]-[APRS]-[CIPSTVD]; it reads CCGSTFSSLS…SVQSPCCRPP (108 aa).

The protein belongs to the KRTAP type 2 family. Interacts with hair keratins.

In terms of biological role, in the hair cortex, hair keratin intermediate filaments are embedded in an interfilamentous matrix, consisting of hair keratin-associated proteins (KRTAP), which are essential for the formation of a rigid and resistant hair shaft through their extensive disulfide bond cross-linking with abundant cysteine residues of hair keratins. The matrix proteins include the high-sulfur and high-glycine-tyrosine keratins. The sequence is that of Keratin-associated protein 2-1 (KRTAP2-1) from Homo sapiens (Human).